The sequence spans 316 residues: Ribosomal RNA large subunit methyltransferase F (316 aa).

Residues 200 to 222 (EEANKSTSRKVSNLNPKEKKNTN) are disordered. Polar residues predominate over residues 204–214 (KSTSRKVSNLN).

It belongs to the methyltransferase superfamily. METTL16/RlmF family.

Its subcellular location is the cytoplasm. It carries out the reaction adenosine(1618) in 23S rRNA + S-adenosyl-L-methionine = N(6)-methyladenosine(1618) in 23S rRNA + S-adenosyl-L-homocysteine + H(+). Functionally, specifically methylates the adenine in position 1618 of 23S rRNA. This is Ribosomal RNA large subunit methyltransferase F from Flavobacterium johnsoniae (strain ATCC 17061 / DSM 2064 / JCM 8514 / BCRC 14874 / CCUG 350202 / NBRC 14942 / NCIMB 11054 / UW101) (Cytophaga johnsonae).